A 177-amino-acid chain; its full sequence is Large ribosomal subunit protein uL6 (177 aa).

This sequence belongs to the universal ribosomal protein uL6 family. Part of the 50S ribosomal subunit.

This protein binds to the 23S rRNA, and is important in its secondary structure. It is located near the subunit interface in the base of the L7/L12 stalk, and near the tRNA binding site of the peptidyltransferase center. The chain is Large ribosomal subunit protein uL6 from Rhodopseudomonas palustris (strain HaA2).